The sequence spans 439 residues: Methylenetetrahydrofolate--tRNA-(uracil-5-)-methyltransferase TrmFO (439 aa).

9-14 (GAGLAG) contributes to the FAD binding site.

The protein belongs to the MnmG family. TrmFO subfamily. The cofactor is FAD.

It localises to the cytoplasm. It carries out the reaction uridine(54) in tRNA + (6R)-5,10-methylene-5,6,7,8-tetrahydrofolate + NADH + H(+) = 5-methyluridine(54) in tRNA + (6S)-5,6,7,8-tetrahydrofolate + NAD(+). The enzyme catalyses uridine(54) in tRNA + (6R)-5,10-methylene-5,6,7,8-tetrahydrofolate + NADPH + H(+) = 5-methyluridine(54) in tRNA + (6S)-5,6,7,8-tetrahydrofolate + NADP(+). In terms of biological role, catalyzes the folate-dependent formation of 5-methyl-uridine at position 54 (M-5-U54) in all tRNAs. In Lactobacillus delbrueckii subsp. bulgaricus (strain ATCC BAA-365 / Lb-18), this protein is Methylenetetrahydrofolate--tRNA-(uracil-5-)-methyltransferase TrmFO.